Here is a 557-residue protein sequence, read N- to C-terminus: Phosphomethylpyrimidine synthase (557 aa).

Residues Asn-197, Met-226, Tyr-255, His-291, Ser-311–Gly-313, Asp-352–Arg-355, and Glu-391 contribute to the substrate site. His-395 is a Zn(2+) binding site. Tyr-418 provides a ligand contact to substrate. Residue His-459 coordinates Zn(2+). Positions 539, 542, and 547 each coordinate [4Fe-4S] cluster.

This sequence belongs to the ThiC family. As to quaternary structure, homodimer. The cofactor is [4Fe-4S] cluster.

The enzyme catalyses 5-amino-1-(5-phospho-beta-D-ribosyl)imidazole + S-adenosyl-L-methionine = 4-amino-2-methyl-5-(phosphooxymethyl)pyrimidine + CO + 5'-deoxyadenosine + formate + L-methionine + 3 H(+). It participates in cofactor biosynthesis; thiamine diphosphate biosynthesis. Catalyzes the synthesis of the hydroxymethylpyrimidine phosphate (HMP-P) moiety of thiamine from aminoimidazole ribotide (AIR) in a radical S-adenosyl-L-methionine (SAM)-dependent reaction. The chain is Phosphomethylpyrimidine synthase from Anaplasma phagocytophilum (strain HZ).